The following is a 62-amino-acid chain: Large ribosomal subunit protein uL29 (62 aa).

Belongs to the universal ribosomal protein uL29 family.

In Cytophaga hutchinsonii (strain ATCC 33406 / DSM 1761 / CIP 103989 / NBRC 15051 / NCIMB 9469 / D465), this protein is Large ribosomal subunit protein uL29.